The chain runs to 180 residues: Small ribosomal subunit protein uS4 (180 aa).

Positions 103–165 (RRLQTLVYKK…KNSPFAKESH (63 aa)) constitute an S4 RNA-binding domain.

Belongs to the universal ribosomal protein uS4 family. Part of the 30S ribosomal subunit. Contacts protein S5. The interaction surface between S4 and S5 is involved in control of translational fidelity.

Functionally, one of the primary rRNA binding proteins, it binds directly to 16S rRNA where it nucleates assembly of the body of the 30S subunit. With S5 and S12 plays an important role in translational accuracy. In Thermococcus gammatolerans (strain DSM 15229 / JCM 11827 / EJ3), this protein is Small ribosomal subunit protein uS4.